The sequence spans 145 residues: Bacilliredoxin BH2759 (145 aa).

The protein belongs to the bacilliredoxin family.

The polypeptide is Bacilliredoxin BH2759 (Halalkalibacterium halodurans (strain ATCC BAA-125 / DSM 18197 / FERM 7344 / JCM 9153 / C-125) (Bacillus halodurans)).